Consider the following 183-residue polypeptide: ATP synthase subunit delta, chloroplastic (183 aa).

It belongs to the ATPase delta chain family. As to quaternary structure, F-type ATPases have 2 components, F(1) - the catalytic core - and F(0) - the membrane proton channel. F(1) has five subunits: alpha(3), beta(3), gamma(1), delta(1), epsilon(1). CF(0) has four main subunits: a(1), b(1), b'(1) and c(10-14). The alpha and beta chains form an alternating ring which encloses part of the gamma chain. F(1) is attached to F(0) by a central stalk formed by the gamma and epsilon chains, while a peripheral stalk is formed by the delta, b and b' chains.

The protein localises to the plastid. It is found in the chloroplast thylakoid membrane. Its function is as follows. F(1)F(0) ATP synthase produces ATP from ADP in the presence of a proton or sodium gradient. F-type ATPases consist of two structural domains, F(1) containing the extramembraneous catalytic core and F(0) containing the membrane proton channel, linked together by a central stalk and a peripheral stalk. During catalysis, ATP synthesis in the catalytic domain of F(1) is coupled via a rotary mechanism of the central stalk subunits to proton translocation. This protein is part of the stalk that links CF(0) to CF(1). It either transmits conformational changes from CF(0) to CF(1) or is implicated in proton conduction. In Cyanidium caldarium (Red alga), this protein is ATP synthase subunit delta, chloroplastic.